The following is a 420-amino-acid chain: Glucose-1-phosphate adenylyltransferase (420 aa).

Alpha-D-glucose 1-phosphate-binding positions include Tyr-107, Gly-172, 187–188 (EK), and Ser-205.

This sequence belongs to the bacterial/plant glucose-1-phosphate adenylyltransferase family. Homotetramer.

The enzyme catalyses alpha-D-glucose 1-phosphate + ATP + H(+) = ADP-alpha-D-glucose + diphosphate. It participates in glycan biosynthesis; glycogen biosynthesis. Functionally, involved in the biosynthesis of ADP-glucose, a building block required for the elongation reactions to produce glycogen. Catalyzes the reaction between ATP and alpha-D-glucose 1-phosphate (G1P) to produce pyrophosphate and ADP-Glc. The polypeptide is Glucose-1-phosphate adenylyltransferase (Bradyrhizobium diazoefficiens (strain JCM 10833 / BCRC 13528 / IAM 13628 / NBRC 14792 / USDA 110)).